The primary structure comprises 348 residues: Rhodopsin (348 aa).

Residue M1 is modified to N-acetylmethionine. Residues 1 to 36 (MNGTEGPDFYIPMSNQTGVVRSPFEYPQYYLAEPWQ) lie on the Extracellular side of the membrane. Residues N2 and N15 are each glycosylated (N-linked (GlcNAc...) asparagine). The chain crosses the membrane as a helical span at residues 37 to 61 (FSMLAAYMFLLIVLGFPINFLTLYV). The Cytoplasmic segment spans residues 62-73 (TVQHKKLRTPLN). The chain crosses the membrane as a helical span at residues 74–96 (YILLNLAVADLFMVLGGFTTTLY). Residues 97–110 (TSLHGYFVFGPTGC) are Extracellular-facing. Cysteines 110 and 187 form a disulfide. A helical membrane pass occupies residues 111 to 133 (NVEGFFATLGGEIALWSLVVLAI). Residues 134-136 (ERY) carry the 'Ionic lock' involved in activated form stabilization motif. The Cytoplasmic portion of the chain corresponds to 134–152 (ERYVVVCKPMSNFRFGENH). Residues 153-173 (AIMGVAFTWIMALACAAPPLV) form a helical membrane-spanning segment. Residues 174 to 202 (GWSRYIPEGMQCSCGIDYYTLKPEVNNES) are Extracellular-facing. E201 contributes to the Zn(2+) binding site. A helical transmembrane segment spans residues 203 to 224 (FVIYMFVVHFTIPLIIIFFCYG). Topologically, residues 225 to 252 (QLVFTVKEAAAQQQESATTQKAEKEVTR) are cytoplasmic. A helical membrane pass occupies residues 253–274 (MVIIMVIAFLICWVPYASVAFY). Over 275–286 (IFTHQGSNFGPI) the chain is Extracellular. Q279 is a Zn(2+) binding site. A helical membrane pass occupies residues 287 to 308 (FMTIPAFFAKSSSIYNPVIYIM). Residue K296 is modified to N6-(retinylidene)lysine. Residues 309–348 (MNKQFRNCMLTTICCGKNPLGDDEASATASKTETSQVAPA) are Cytoplasmic-facing. Residues C322 and C323 are each lipidated (S-palmitoyl cysteine). Residues 330 to 348 (DDEASATASKTETSQVAPA) form an interaction with SAG region. S334 is modified (phosphoserine). Residue T336 is modified to Phosphothreonine. The residue at position 338 (S338) is a Phosphoserine. Phosphothreonine occurs at positions 340 and 342. Position 343 is a phosphoserine (S343).

Belongs to the G-protein coupled receptor 1 family. Opsin subfamily. As to quaternary structure, homodimer. May form a complex composed of RHO, GRK1 and RCVRN in a Ca(2+)-dependent manner; RCVRN prevents the interaction between GRK1 and RHO. Interacts with GRK1. Interacts (phosphorylated form) with SAG. Interacts with GNAT1. Interacts with GNAT3. SAG and G-proteins compete for a common binding site. Interacts with PRCD; the interaction promotes PRCD stability. Forms a complex with ASAP1 and ARF4. Forms a complex with ASAP1, RAB11A, Rabin8/RAB3IP, ARF4 and RAB11FIP3; the complex regulates Golgi-to-cilia rhodopsin/RHO transport in photoreceptors. In terms of processing, phosphorylated on some or all of the serine and threonine residues present in the C-terminal region. Contains one covalently linked retinal chromophore. Upon light absorption, the covalently bound 11-cis-retinal is converted to all-trans-retinal. After hydrolysis of the Schiff base and release of the covalently bound all-trans-retinal, active rhodopsin is regenerated by binding of a fresh molecule of 11-cis-retinal.

Its subcellular location is the membrane. It localises to the cell projection. The protein localises to the cilium. The protein resides in the photoreceptor outer segment. Its function is as follows. Photoreceptor required for image-forming vision at low light intensity. Required for photoreceptor cell viability after birth. Light-induced isomerization of 11-cis to all-trans retinal triggers a conformational change that activates signaling via G-proteins. Subsequent receptor phosphorylation mediates displacement of the bound G-protein alpha subunit by the arrestin SAG and terminates signaling. This is Rhodopsin (RHO) from Oryctolagus cuniculus (Rabbit).